The chain runs to 961 residues: E3 ubiquitin-protein ligase TRIM37 (961 aa).

An N-acetylmethionine modification is found at M1. Residues 15 to 55 (CFICMEKLRDARLCPHCSKLCCFSCIRRWLTEQRAQCPHCR) form an RING-type; degenerate zinc finger. The B box-type zinc-finger motif lies at 90–132 (NEKDKCENHHEKLSVFCWTCKKCICHQCALWGGMHGGHTFKPL). Residues C95, H98, C117, and H124 each contribute to the Zn(2+) site. Residues 132-234 (LAEIYEQHVT…VEHQLRSCSK (103 aa)) adopt a coiled-coil conformation. The MATH domain occupies 276–403 (YDSATFVLEN…NDTVILRFQV (128 aa)). The stretch at 419-450 (ITQLEAAQTGYIQQINNLKERLTIELSRTQKS) forms a coiled coil. Disordered regions lie at residues 447–514 (TQKS…HHEL), 529–561 (VNHL…SGEN), 645–665 (SLLQ…KQQA), 776–811 (AVDS…SPRA), and 874–961 (LESH…GGGR). S454 carries the phosphoserine modification. Residues 504–514 (KIQNEDYHHEL) show a composition bias toward basic and acidic residues. Low complexity predominate over residues 535 to 545 (SSSSASSTATS). Residues 548–561 (EENDIDEETMSGEN) show a composition bias toward acidic residues. Positions 776-787 (AVDSGENSRSKG) are enriched in basic and acidic residues. A compositionally biased stretch (low complexity) spans 795-806 (GSSGSSQSGSRH). Acidic residues predominate over residues 903 to 915 (SDIECDTENEEQE).

This sequence belongs to the TRIM/RBCC family. Associates with the PRC2/EED-EZH2 complex. Auto-ubiquitinated. As to expression, highly expressed in testis and brain. In embryonic tissues, expressed in epithelia, including ducts of the developing pancreas, epithelium of the midgut and nasal epithelium. In adult, detected in the central and peripheral nervous systems, including enteric ganglia, retina and the adrenal medulla (at protein level).

It localises to the chromosome. It is found in the cytoplasm. Its subcellular location is the perinuclear region. The protein resides in the peroxisome membrane. The catalysed reaction is S-ubiquitinyl-[E2 ubiquitin-conjugating enzyme]-L-cysteine + [acceptor protein]-L-lysine = [E2 ubiquitin-conjugating enzyme]-L-cysteine + N(6)-ubiquitinyl-[acceptor protein]-L-lysine.. It participates in protein modification; protein ubiquitination. Functionally, E3 ubiquitin-protein ligase required to prevent centriole reduplication. Probably acts by ubiquitinating positive regulators of centriole reduplication. Mediates monoubiquitination of 'Lys-119' of histone H2A (H2AK119Ub), a specific tag for epigenetic transcriptional repression: associates with some Polycomb group (PcG) multiprotein PRC2-like complex and mediates repression of target genes. Also acts as a positive regulator of peroxisome import by mediating monoubiquitination of PEX5 at 'Lys-472': monoubiquitination promotes PEX5 stabilitation by preventing its polyubiquitination and degradation by the proteasome. In Mus musculus (Mouse), this protein is E3 ubiquitin-protein ligase TRIM37.